Consider the following 476-residue polypeptide: RNA-splicing ligase RtcB homolog (476 aa).

5 residues coordinate Mn(2+): Asp90, Cys93, His198, His230, and His324. 197–201 (NHYAE) lines the GMP pocket. Residues 324-325 (HN), 373-376 (GGTM), Ser380, 399-402 (HGAG), and Lys475 each bind GMP. His399 functions as the GMP-histidine intermediate in the catalytic mechanism.

This sequence belongs to the RtcB family. Catalytic component of the tRNA-splicing ligase complex. It depends on Mn(2+) as a cofactor.

It carries out the reaction a 3'-end 3'-phospho-ribonucleotide-RNA + a 5'-end dephospho-ribonucleoside-RNA + GTP = a ribonucleotidyl-ribonucleotide-RNA + GMP + diphosphate. It catalyses the reaction a 3'-end 2',3'-cyclophospho-ribonucleotide-RNA + a 5'-end dephospho-ribonucleoside-RNA + GTP + H2O = a ribonucleotidyl-ribonucleotide-RNA + GMP + diphosphate + H(+). Catalytic subunit of the tRNA-splicing ligase complex that acts by directly joining spliced tRNA halves to mature-sized tRNAs by incorporating the precursor-derived splice junction phosphate into the mature tRNA as a canonical 3',5'-phosphodiester. May act as an RNA ligase with broad substrate specificity, and may function toward other RNAs. The chain is RNA-splicing ligase RtcB homolog from Chlamydomonas reinhardtii (Chlamydomonas smithii).